A 635-amino-acid polypeptide reads, in one-letter code: Threonine--tRNA ligase (635 aa).

The region spanning 1-61 is the TGS domain; it reads MIKITLKDGK…HKDSSLEILT (61 aa). A catalytic region spans residues 242 to 532; it reads DHRKLGKELD…LIEQYAGAFP (291 aa). Cysteine 333, histidine 384, and histidine 509 together coordinate Zn(2+).

This sequence belongs to the class-II aminoacyl-tRNA synthetase family. As to quaternary structure, homodimer. It depends on Zn(2+) as a cofactor.

It localises to the cytoplasm. The enzyme catalyses tRNA(Thr) + L-threonine + ATP = L-threonyl-tRNA(Thr) + AMP + diphosphate + H(+). Catalyzes the attachment of threonine to tRNA(Thr) in a two-step reaction: L-threonine is first activated by ATP to form Thr-AMP and then transferred to the acceptor end of tRNA(Thr). Also edits incorrectly charged L-seryl-tRNA(Thr). This chain is Threonine--tRNA ligase, found in Clostridium botulinum (strain Loch Maree / Type A3).